The primary structure comprises 429 residues: Histidine--tRNA ligase (429 aa).

This sequence belongs to the class-II aminoacyl-tRNA synthetase family. In terms of assembly, homodimer.

The protein localises to the cytoplasm. It carries out the reaction tRNA(His) + L-histidine + ATP = L-histidyl-tRNA(His) + AMP + diphosphate + H(+). The sequence is that of Histidine--tRNA ligase from Rippkaea orientalis (strain PCC 8801 / RF-1) (Cyanothece sp. (strain PCC 8801)).